The sequence spans 274 residues: Large ribosomal subunit protein uL2 (274 aa).

Residues 222–274 (GVAMNPVDHPHGGGEGRGKGHHPQSPWGQLAKGYKTRRGKKASDKLIVRRRNG) are disordered. The span at 229–239 (DHPHGGGEGRG) shows a compositional bias: basic and acidic residues.

It belongs to the universal ribosomal protein uL2 family. As to quaternary structure, part of the 50S ribosomal subunit. Forms a bridge to the 30S subunit in the 70S ribosome.

Functionally, one of the primary rRNA binding proteins. Required for association of the 30S and 50S subunits to form the 70S ribosome, for tRNA binding and peptide bond formation. It has been suggested to have peptidyltransferase activity; this is somewhat controversial. Makes several contacts with the 16S rRNA in the 70S ribosome. This Thermosipho melanesiensis (strain DSM 12029 / CIP 104789 / BI429) protein is Large ribosomal subunit protein uL2.